We begin with the raw amino-acid sequence, 348 residues long: D-alanine--D-alanine ligase (348 aa).

The ATP-grasp domain maps to 132–334 (KRVLESAGIA…YPDLIEKLVA (203 aa)). Residue 162–217 (EEKLSYPVFTKPSNMGSSVGISKSDNQEELRASLDLAFKYDSRVLVEQGVTAREIE) coordinates ATP. Positions 288, 301, and 303 each coordinate Mg(2+).

It belongs to the D-alanine--D-alanine ligase family. The cofactor is Mg(2+). Requires Mn(2+) as cofactor.

Its subcellular location is the cytoplasm. The catalysed reaction is 2 D-alanine + ATP = D-alanyl-D-alanine + ADP + phosphate + H(+). It participates in cell wall biogenesis; peptidoglycan biosynthesis. Cell wall formation. The chain is D-alanine--D-alanine ligase from Streptococcus gordonii (strain Challis / ATCC 35105 / BCRC 15272 / CH1 / DL1 / V288).